Consider the following 98-residue polypeptide: NADH-ubiquinone oxidoreductase chain 4L (98 aa).

Transmembrane regions (helical) follow at residues Met1–Ile21, Thr29–Thr49, and Thr59–Val79.

This sequence belongs to the complex I subunit 4L family. As to quaternary structure, core subunit of respiratory chain NADH dehydrogenase (Complex I) which is composed of 45 different subunits.

Its subcellular location is the mitochondrion inner membrane. It carries out the reaction a ubiquinone + NADH + 5 H(+)(in) = a ubiquinol + NAD(+) + 4 H(+)(out). Its function is as follows. Core subunit of the mitochondrial membrane respiratory chain NADH dehydrogenase (Complex I) which catalyzes electron transfer from NADH through the respiratory chain, using ubiquinone as an electron acceptor. Part of the enzyme membrane arm which is embedded in the lipid bilayer and involved in proton translocation. In Sminthopsis crassicaudata (Fat-tailed dunnart), this protein is NADH-ubiquinone oxidoreductase chain 4L (MT-ND4L).